The following is a 212-amino-acid chain: Large ribosomal subunit protein uL3 (212 aa).

At Gln154 the chain carries N5-methylglutamine.

It belongs to the universal ribosomal protein uL3 family. Part of the 50S ribosomal subunit. Forms a cluster with proteins L14 and L19. Post-translationally, methylated by PrmB.

Functionally, one of the primary rRNA binding proteins, it binds directly near the 3'-end of the 23S rRNA, where it nucleates assembly of the 50S subunit. This chain is Large ribosomal subunit protein uL3, found in Hydrogenovibrio crunogenus (strain DSM 25203 / XCL-2) (Thiomicrospira crunogena).